The following is a 540-amino-acid chain: Acyl-CoA synthetase 7 (540 aa).

ATP contacts are provided by residues 186-194, aspartate 415, arginine 430, and lysine 522; that span reads SSGTTGKPK. Positions 538–540 match the Microbody targeting signal motif; sequence AKL.

Belongs to the ATP-dependent AMP-binding enzyme family. Expressed in intestine.

It is found in the peroxisome. The enzyme catalyses nonanoate + ATP + CoA = nonanoyl-CoA + AMP + diphosphate. It carries out the reaction IC-asc-C7 + ATP + CoA = IC-asc-C7-CoA + AMP + diphosphate. The catalysed reaction is IC-asc-C9 + ATP + CoA = IC-asc-C9-CoA + AMP + diphosphate. In terms of biological role, plays a role in ascaroside pheromones biosynthesis, which regulates development and behavior. Specifically, activates the side chain of medium-chain indol-3-carbonyl (IC)-ascarosides for shortening through beta-oxidation. Converts IC-asc-C7 and IC-asc-C9 into IC-asc-C7-CoA and IC-asc-C9-CoA, respectively. May play a role in fatty-acid metabolism by activating and converting nonanoate (C9) into nonanoyl-CoA (C9-CoA). This chain is Acyl-CoA synthetase 7, found in Caenorhabditis elegans.